Here is a 132-residue protein sequence, read N- to C-terminus: Fatty acid-binding protein type 3 (132 aa).

This sequence belongs to the calycin superfamily. Fatty-acid binding protein (FABP) family.

The polypeptide is Fatty acid-binding protein type 3 (Fasciola hepatica (Liver fluke)).